The sequence spans 553 residues: MRDYDEVIAFLGEWGPFQRLIFFLLSASIIPNGFNGMSVVFLAGTPEHRCLVPDTVNLSSSWRNHSIPLETKDGRQVPQSCRRYRLATIANFSAMGLEPGQDVDLEQLEQESCLDGWEYDKDIFLSTIVTEWNLVCEDDWKTPLTTSLFFVGVLCGSFVSGQLSDRFGRKKVLFATMAVQTGFSFVQIFSTNWEMFTVLFAIVGMGQISNYVVAFILGTEILSKSVRIIFSTLGVCTFFAIGYMVLPLFAYFIRDWRMLLLALTLPGLFCVPLWWFIPESPRWLISQRRFAEAEQIIQKAAKMNSIVAPAGIFDPLELQELNSLKQQKVIILDLFRTRNIATITVMAVMLWMLTSVGYFALSLNVPNLHGDVYLNCFLSGLIEVPAYFTAWLLLRTLPRRYIIAGVLFWGGGVLLLIQVVPEDYNFVSIGLVMLGKFGITSAFSMLYVFTAELYPTLVRNMAVGITSMASRVGSIIAPYFVYLGAYNRLLPYILMGSLTVLIGIITLFFPESFGVTLPENLEQMQKVRGFRCGKKSTVSVDREESPKVLITAF.

Residues 1 to 20 (MRDYDEVIAFLGEWGPFQRL) lie on the Cytoplasmic side of the membrane. A helical transmembrane segment spans residues 21–41 (IFFLLSASIIPNGFNGMSVVF). Residues 42–142 (LAGTPEHRCL…NLVCEDDWKT (101 aa)) lie on the Extracellular side of the membrane. 3 N-linked (GlcNAc...) asparagine glycosylation sites follow: Asn57, Asn64, and Asn91. A helical transmembrane segment spans residues 143 to 163 (PLTTSLFFVGVLCGSFVSGQL). Residues 164-171 (SDRFGRKK) lie on the Cytoplasmic side of the membrane. A helical membrane pass occupies residues 172–192 (VLFATMAVQTGFSFVQIFSTN). The Extracellular segment spans residues 193–197 (WEMFT). The helical transmembrane segment at 198–218 (VLFAIVGMGQISNYVVAFILG) threads the bilayer. 218 to 225 (GTEILSKS) is an ATP binding site. At 219–232 (TEILSKSVRIIFST) the chain is on the cytoplasmic side. A helical membrane pass occupies residues 233 to 253 (LGVCTFFAIGYMVLPLFAYFI). Residues 254-257 (RDWR) lie on the Extracellular side of the membrane. A helical transmembrane segment spans residues 258 to 278 (MLLLALTLPGLFCVPLWWFIP). Residues 279–339 (ESPRWLISQR…IILDLFRTRN (61 aa)) lie on the Cytoplasmic side of the membrane. Residues 340-360 (IATITVMAVMLWMLTSVGYFA) traverse the membrane as a helical segment. Over 361 to 373 (LSLNVPNLHGDVY) the chain is Extracellular. The helical transmembrane segment at 374–394 (LNCFLSGLIEVPAYFTAWLLL) threads the bilayer. Topologically, residues 395–400 (RTLPRR) are cytoplasmic. The helical transmembrane segment at 401–421 (YIIAGVLFWGGGVLLLIQVVP) threads the bilayer. The Extracellular segment spans residues 422–428 (EDYNFVS). A helical transmembrane segment spans residues 429-449 (IGLVMLGKFGITSAFSMLYVF). At 450-462 (TAELYPTLVRNMA) the chain is on the cytoplasmic side. Residues 463–483 (VGITSMASRVGSIIAPYFVYL) traverse the membrane as a helical segment. Residues 484-488 (GAYNR) lie on the Extracellular side of the membrane. Residues 489-509 (LLPYILMGSLTVLIGIITLFF) form a helical membrane-spanning segment. Topologically, residues 510 to 553 (PESFGVTLPENLEQMQKVRGFRCGKKSTVSVDREESPKVLITAF) are cytoplasmic.

This sequence belongs to the major facilitator (TC 2.A.1) superfamily. Organic cation transporter (TC 2.A.1.19) family. As to quaternary structure, interacts with PDZK1. Expressed in kidney. Expressed in small intestines. Expressed in liver in non-parenchymal liver tissue such as sinusoidal vessels. Weakly expressed in lung and brain. Expressed in testis and spleen. Expressed in heart.

The protein resides in the apical cell membrane. It is found in the mitochondrion membrane. Its subcellular location is the basal cell membrane. It catalyses the reaction ergothioneine(out) + Na(+)(out) = ergothioneine(in) + Na(+)(in). It carries out the reaction acetylcholine(in) = acetylcholine(out). The catalysed reaction is (R)-carnitine(out) + Na(+)(out) = (R)-carnitine(in) + Na(+)(in). The enzyme catalyses glycine betaine(out) + Na(+)(out) = glycine betaine(in) + Na(+)(in). Its activity is regulated as follows. Allosterically activated by intracellular ATP. Its function is as follows. Transporter that mediates the transport of endogenous and microbial zwitterions and organic cations. Functions as a Na(+)-dependent and pH-dependent high affinity microbial symporter of potent food-derived antioxidant ergothioeine. Transports one sodium ion with one ergothioeine molecule. Involved in the absorption of ergothioneine from the luminal/apical side of the small intestine and renal tubular cells, and into non-parenchymal liver cells, thereby contributing to maintain steady-state ergothioneine level in the body. Also mediates the bidirectional transport of acetycholine, although the exact transport mechanism has not been fully identified yet. Most likely exports anti-inflammatory acetylcholine in non-neuronal tissues, thereby contributing to the non-neuronal cholinergic system. Displays a general physiological role linked to better survival by controlling inflammation and oxidative stress, which may be related to ergothioneine and acetycholine transports. May also function as a low-affinity Na(+)-dependent transporter of L-carnitine through the mitochondrial membrane, thereby maintaining intracellular carnitine homeostasis. May contribute to regulate the transport of cationic compounds in testis across the blood-testis-barrier. The chain is Solute carrier family 22 member 4 from Mus musculus (Mouse).